Reading from the N-terminus, the 121-residue chain is Large ribosomal subunit protein bL20 (121 aa).

This sequence belongs to the bacterial ribosomal protein bL20 family.

In terms of biological role, binds directly to 23S ribosomal RNA and is necessary for the in vitro assembly process of the 50S ribosomal subunit. It is not involved in the protein synthesizing functions of that subunit. This is Large ribosomal subunit protein bL20 from Roseobacter denitrificans (strain ATCC 33942 / OCh 114) (Erythrobacter sp. (strain OCh 114)).